The following is a 282-amino-acid chain: Bis(5'-nucleosyl)-tetraphosphatase, symmetrical (282 aa).

It belongs to the Ap4A hydrolase family.

The catalysed reaction is P(1),P(4)-bis(5'-adenosyl) tetraphosphate + H2O = 2 ADP + 2 H(+). Functionally, hydrolyzes diadenosine 5',5'''-P1,P4-tetraphosphate to yield ADP. The sequence is that of Bis(5'-nucleosyl)-tetraphosphatase, symmetrical from Escherichia coli O127:H6 (strain E2348/69 / EPEC).